We begin with the raw amino-acid sequence, 308 residues long: Small ribosomal subunit protein uS5c (308 aa).

The transit peptide at 1–55 directs the protein to the chloroplast; that stretch reads MATTATTTPSATSLTTLHRRIPLFPTTTTLLSLSSSSKPLFLSLSSTRSFPTHLY. Residues 152–215 form the S5 DRBM domain; that stretch reads FEENVVQVRR…VDARRNIITV (64 aa).

As to quaternary structure, component of the chloroplast small ribosomal subunit (SSU). Mature 70S chloroplast ribosomes of higher plants consist of a small (30S) and a large (50S) subunit. The 30S small subunit contains 1 molecule of ribosomal RNA (16S rRNA) and 24 different proteins. The 50S large subunit contains 3 rRNA molecules (23S, 5S and 4.5S rRNA) and 33 different proteins. uS5c binds directly to 16S ribosomal RNA.

It is found in the plastid. Its subcellular location is the chloroplast. Functionally, component of the chloroplast ribosome (chloro-ribosome), a dedicated translation machinery responsible for the synthesis of chloroplast genome-encoded proteins, including proteins of the transcription and translation machinery and components of the photosynthetic apparatus. In Spinacia oleracea (Spinach), this protein is Small ribosomal subunit protein uS5c (rps5).